The chain runs to 1278 residues: NPC intracellular cholesterol transporter 1 (1278 aa).

Positions 1–22 (MTARGLALGLLLLLLCPAQVFS) are cleaved as a signal peptide. At 23–261 (QSCVWYGECG…QPPPPPAPWT (239 aa)) the chain is on the lumenal side. 9 cysteine pairs are disulfide-bonded: Cys-25/Cys-74, Cys-31/Cys-42, Cys-63/Cys-109, Cys-75/Cys-113, Cys-97/Cys-238, Cys-100/Cys-160, Cys-177/Cys-184, Cys-227/Cys-243, and Cys-240/Cys-247. Asn-41 is a binding site for cholesterol. Asn-70 carries an N-linked (GlcNAc...) asparagine glycan. A cholesterol-binding site is contributed by Gln-79. 2 N-linked (GlcNAc...) asparagine glycosylation sites follow: Asn-122 and Asn-135. Asn-158 carries an N-linked (GlcNAc...) asparagine; atypical glycan. The tract at residues 175 to 205 (LLCGKDADACNATNWIEYMFNKDNGQAPFTI) is important for cholesterol binding and cholesterol transfer from NPC1 to liposomes. N-linked (GlcNAc...) asparagine glycosylation is found at Asn-185 and Asn-222. A helical transmembrane segment spans residues 262 to 282 (ILGLDAMYVIMWITYMAFLLV). The Cytoplasmic segment spans residues 283–350 (FFGAFFAVWC…RWGSFCVRNP (68 aa)). The chain crosses the membrane as a helical span at residues 351-371 (GCVIFFSLVFITACSSGLVFV). Residues 372–620 (RVTTNPVDLW…DELNRESDSD (249 aa)) are Lumenal-facing. Asn-452, Asn-459, Asn-478, Asn-524, Asn-557, Asn-572, and Asn-598 each carry an N-linked (GlcNAc...) asparagine glycan. Disulfide bonds link Cys-468-Cys-479 and Cys-516-Cys-533. An SSD domain is found at 620-785 (DVFTVVISYA…ITCFVSLLGL (166 aa)). A helical membrane pass occupies residues 621–641 (VFTVVISYAIMFLYISLALGH). Residues 642–653 (MKSCRRLLVDSK) lie on the Cytoplasmic side of the membrane. Residues 654–675 (VSLGIAGILIVLSSVACSLGVF) traverse the membrane as a helical segment. Over 676 to 685 (SYIGLPLTLI) the chain is Lumenal. Residues 686–706 (VIEVIPFLVLAVGVDNIFILV) form a helical membrane-spanning segment. The Cytoplasmic portion of the chain corresponds to 707-730 (QAYQRDERLQGETLDQQLGRVLGE). A helical transmembrane segment spans residues 731–751 (VAPSMFLSSFSETVAFFLGAL). Residues 752–759 (SVMPAVHT) lie on the Lumenal side of the membrane. The helical transmembrane segment at 760–783 (FSLFAGLAVFIDFLLQITCFVSLL) threads the bilayer. The Cytoplasmic portion of the chain corresponds to 784-832 (GLDIKRQEKNRLDIFCCVRGAEDGTSVQASESCLFRFFKNSYSPLLLKD). A helical membrane pass occupies residues 833 to 853 (WMRPIVIAIFVGVLSFSIAVL). The Lumenal portion of the chain corresponds to 854–1097 (NKVDIGLDQS…YEQYLTIIDD (244 aa)). Cys-909 and Cys-914 are joined by a disulfide. 6 N-linked (GlcNAc...) asparagine glycosylation sites follow: Asn-916, Asn-931, Asn-961, Asn-968, Asn-1064, and Asn-1072. Cystine bridges form between Cys-956-Cys-1011, Cys-957-Cys-979, and Cys-967-Cys-976. A helical transmembrane segment spans residues 1098–1118 (TIFNLGVSLGAIFLVTMVLLG). The Cytoplasmic portion of the chain corresponds to 1119-1124 (CELWSA). Residues 1125–1145 (VIMCATIAMVLVNMFGVMWLW) form a helical membrane-spanning segment. Topologically, residues 1146–1150 (GISLN) are lumenal. A helical membrane pass occupies residues 1151-1171 (AVSLVNLVMSCGISVEFCSHI). Residues 1172–1194 (TRAFTVSMKGSRVERAEEALAHM) lie on the Cytoplasmic side of the membrane. A helical membrane pass occupies residues 1195–1215 (GSSVFSGITLTKFGGIVVLAF). Over 1216-1223 (AKSQIFQI) the chain is Lumenal. A helical membrane pass occupies residues 1224-1244 (FYFRMYLAMVLLGATHGLIFL). The Cytoplasmic portion of the chain corresponds to 1245–1278 (PVLLSYIGPSVNKAKSCATEERYKGTERERLLNF). The segment at 1275 to 1278 (LLNF) is required for location in lysosomes. The Di-leucine motif motif lies at 1275–1278 (LLNF).

This sequence belongs to the patched family. As to quaternary structure, interacts (via the second lumenal domain) with NPC2. Interacts with TMEM97; the interaction may decrease NPC1 availability to the cell. Interacts with TIM1. Interacts with SLC38A9; this interaction inhibits cholesterol-mediated mTORC1 activation via its sterol transport activity. In terms of assembly, (Microbial infection) Interacts with ebolavirus glycoprotein. N-glycosylated.

The protein resides in the late endosome membrane. The protein localises to the lysosome membrane. The enzyme catalyses cholesterol(in) = cholesterol(out). Intracellular cholesterol transporter which acts in concert with NPC2 and plays an important role in the egress of cholesterol from the endosomal/lysosomal compartment. Unesterified cholesterol that has been released from LDLs in the lumen of the late endosomes/lysosomes is transferred by NPC2 to the cholesterol-binding pocket in the N-terminal domain of NPC1. Cholesterol binds to NPC1 with the hydroxyl group buried in the binding pocket. Binds oxysterol with higher affinity than cholesterol. May play a role in vesicular trafficking in glia, a process that may be crucial for maintaining the structural and functional integrity of nerve terminals. Inhibits cholesterol-mediated mTORC1 activation throught its interaction with SLC38A9. Functionally, (Microbial infection) Acts as an endosomal entry receptor for ebolavirus. The polypeptide is NPC intracellular cholesterol transporter 1 (Homo sapiens (Human)).